Here is a 361-residue protein sequence, read N- to C-terminus: MVDSMEFFDREKEINYLVKVLSFEPNLIYFIYGPINSGKTTLIKHIIENKLDRDKYVVFYINLREHFISKYEDFIEVLFNTYEETFIEKLKKYLLSFINDLPKNIDVKSTILTGIPVPKNTLNEFLSTKNSENVFEYLTKIFEDIKKKGKQPILIIDELQKIGDLKINGFLIYELFNFFIDLTKEKHLCHVLCLSSDSLFIERVYNEGTLKDRCKYYLVDDFDYKTTKAFLKKHNFNDEEIDIVWHYFGGKPIKLVEAIQEKLLGEDVKEFCKKSLRVRKRQLKDLLYSLEDDNKELFERVIKLFENFKNRDEIFYEKISEEIVWTVKKNILFVNIEEGILKPQSKLDLLAIREILDEIKT.

33–40 serves as a coordination point for ATP; the sequence is GPINSGKT.

This sequence belongs to the archaeal ATPase family.

This is an uncharacterized protein from Methanocaldococcus jannaschii (strain ATCC 43067 / DSM 2661 / JAL-1 / JCM 10045 / NBRC 100440) (Methanococcus jannaschii).